We begin with the raw amino-acid sequence, 561 residues long: Dihydroxy-acid dehydratase (561 aa).

A [2Fe-2S] cluster-binding site is contributed by C51. Residue D83 participates in Mg(2+) binding. Position 124 (C124) interacts with [2Fe-2S] cluster. Mg(2+) contacts are provided by D125 and K126. N6-carboxylysine is present on K126. Position 196 (C196) interacts with [2Fe-2S] cluster. Residue E448 participates in Mg(2+) binding. The Proton acceptor role is filled by S473.

It belongs to the IlvD/Edd family. In terms of assembly, homodimer. Requires [2Fe-2S] cluster as cofactor. Mg(2+) is required as a cofactor.

It carries out the reaction (2R)-2,3-dihydroxy-3-methylbutanoate = 3-methyl-2-oxobutanoate + H2O. It catalyses the reaction (2R,3R)-2,3-dihydroxy-3-methylpentanoate = (S)-3-methyl-2-oxopentanoate + H2O. It participates in amino-acid biosynthesis; L-isoleucine biosynthesis; L-isoleucine from 2-oxobutanoate: step 3/4. It functions in the pathway amino-acid biosynthesis; L-valine biosynthesis; L-valine from pyruvate: step 3/4. Its function is as follows. Functions in the biosynthesis of branched-chain amino acids. Catalyzes the dehydration of (2R,3R)-2,3-dihydroxy-3-methylpentanoate (2,3-dihydroxy-3-methylvalerate) into 2-oxo-3-methylpentanoate (2-oxo-3-methylvalerate) and of (2R)-2,3-dihydroxy-3-methylbutanoate (2,3-dihydroxyisovalerate) into 2-oxo-3-methylbutanoate (2-oxoisovalerate), the penultimate precursor to L-isoleucine and L-valine, respectively. This is Dihydroxy-acid dehydratase from Sulfolobus acidocaldarius (strain ATCC 33909 / DSM 639 / JCM 8929 / NBRC 15157 / NCIMB 11770).